The chain runs to 430 residues: Adenylosuccinate synthetase (430 aa).

GTP-binding positions include 12 to 18 (GDEGKGK) and 40 to 42 (GHT). Catalysis depends on aspartate 13, which acts as the Proton acceptor. Residues aspartate 13 and glycine 40 each coordinate Mg(2+). Residues 13-16 (DEGK), 38-41 (NAGH), threonine 130, arginine 144, glutamine 224, threonine 239, and arginine 303 each bind IMP. Catalysis depends on histidine 41, which acts as the Proton donor. A substrate-binding site is contributed by 299 to 305 (TNTGRAR). Residues arginine 305, 331 to 333 (KLD), and 413 to 415 (STS) each bind GTP.

It belongs to the adenylosuccinate synthetase family. In terms of assembly, homodimer. The cofactor is Mg(2+).

It localises to the cytoplasm. It catalyses the reaction IMP + L-aspartate + GTP = N(6)-(1,2-dicarboxyethyl)-AMP + GDP + phosphate + 2 H(+). It participates in purine metabolism; AMP biosynthesis via de novo pathway; AMP from IMP: step 1/2. Its function is as follows. Plays an important role in the de novo pathway of purine nucleotide biosynthesis. Catalyzes the first committed step in the biosynthesis of AMP from IMP. This chain is Adenylosuccinate synthetase, found in Hyphomonas neptunium (strain ATCC 15444).